The following is a 327-amino-acid chain: Malate dehydrogenase (327 aa).

12–18 is a binding site for NAD(+); it reads GAAGQIG. Substrate contacts are provided by Arg93 and Arg99. NAD(+) is bound by residues Asn106, Gln113, and 130-132; that span reads VGN. Residues Asn132 and Arg163 each contribute to the substrate site. His188 serves as the catalytic Proton acceptor.

The protein belongs to the LDH/MDH superfamily. MDH type 2 family.

It catalyses the reaction (S)-malate + NAD(+) = oxaloacetate + NADH + H(+). Functionally, catalyzes the reversible oxidation of malate to oxaloacetate. This is Malate dehydrogenase from Cupriavidus pinatubonensis (strain JMP 134 / LMG 1197) (Cupriavidus necator (strain JMP 134)).